Consider the following 187-residue polypeptide: RNA 2',3'-cyclic phosphodiesterase (187 aa).

Residue His40 is the Proton donor of the active site. 2 consecutive short sequence motifs (HXTX) follow at residues 40-43 (HLTL) and 125-128 (HITI). His125 functions as the Proton acceptor in the catalytic mechanism.

Belongs to the 2H phosphoesterase superfamily. ThpR family.

It carries out the reaction a 3'-end 2',3'-cyclophospho-ribonucleotide-RNA + H2O = a 3'-end 2'-phospho-ribonucleotide-RNA + H(+). Hydrolyzes RNA 2',3'-cyclic phosphodiester to an RNA 2'-phosphomonoester. The protein is RNA 2',3'-cyclic phosphodiesterase of Thermotoga maritima (strain ATCC 43589 / DSM 3109 / JCM 10099 / NBRC 100826 / MSB8).